We begin with the raw amino-acid sequence, 262 residues long: Nickel import ATP-binding protein NikD (262 aa).

The ABC transporter domain occupies 6-249 (LAIEGLTATT…PGHEVTRMLV (244 aa)). 42-49 (GASGSGKS) lines the ATP pocket.

Belongs to the ABC transporter superfamily. Nickel importer (TC 3.A.1.5.3) family. In terms of assembly, the complex is composed of two ATP-binding proteins (NikD and NikE), two transmembrane proteins (NikB and NikC) and a solute-binding protein (NikA).

The protein resides in the cell inner membrane. The enzyme catalyses Ni(2+)(out) + ATP + H2O = Ni(2+)(in) + ADP + phosphate + H(+). In terms of biological role, part of the ABC transporter complex NikABCDE involved in nickel import. Responsible for energy coupling to the transport system. The sequence is that of Nickel import ATP-binding protein NikD from Brucella suis biovar 1 (strain 1330).